The primary structure comprises 510 residues: NAD(P)H-quinone oxidoreductase subunit 2 B, chloroplastic (510 aa).

The next 13 helical transmembrane spans lie at 24 to 44 (LLLF…GLIL), 57 to 77 (IPWL…ALLF), 99 to 119 (IFQF…VEYI), 124 to 144 (MAIT…MFLC), 149 to 169 (LITI…LSGY), 183 to 203 (YLLM…WLYG), 227 to 247 (PGIS…LSPA), 295 to 315 (WHLL…LIAI), 323 to 343 (MLAY…IVGD), 347 to 367 (GYAS…GTFA), 395 to 415 (ALSL…AGFF), 418 to 438 (LHLF…IGLL), and 482 to 502 (LSMI…NPII).

This sequence belongs to the complex I subunit 2 family. NDH is composed of at least 16 different subunits, 5 of which are encoded in the nucleus.

The protein localises to the plastid. It localises to the chloroplast thylakoid membrane. The enzyme catalyses a plastoquinone + NADH + (n+1) H(+)(in) = a plastoquinol + NAD(+) + n H(+)(out). It carries out the reaction a plastoquinone + NADPH + (n+1) H(+)(in) = a plastoquinol + NADP(+) + n H(+)(out). In terms of biological role, NDH shuttles electrons from NAD(P)H:plastoquinone, via FMN and iron-sulfur (Fe-S) centers, to quinones in the photosynthetic chain and possibly in a chloroplast respiratory chain. The immediate electron acceptor for the enzyme in this species is believed to be plastoquinone. Couples the redox reaction to proton translocation, and thus conserves the redox energy in a proton gradient. The chain is NAD(P)H-quinone oxidoreductase subunit 2 B, chloroplastic from Cucumis sativus (Cucumber).